Here is a 397-residue protein sequence, read N- to C-terminus: Bifunctional arginine demethylase and lysyl-hydroxylase psr-1 (397 aa).

The JmjC domain occupies 146–310 (RKTKKLSEDY…LVWPKTVRGR (165 aa)). Residue T189 coordinates substrate. Fe cation contacts are provided by H192 and D194. N202 contributes to the 2-oxoglutarate binding site. K209 is a binding site for substrate. Fe cation is bound at residue H278. T290 contacts 2-oxoglutarate. The segment covering 334-344 (SCTDTPPQSLN) has biased composition (polar residues). The tract at residues 334-383 (SCTDTPPQSLNDSSSDSSSSSSSSDDSSDSETEEDSGRCGLGNRKRRNDV) is disordered. Positions 345–358 (DSSSDSSSSSSSSD) are enriched in low complexity.

The protein belongs to the JMJD6 family. As to quaternary structure, interacts with ced-5 and ced-12. It depends on Fe(2+) as a cofactor.

Its subcellular location is the nucleus. Functionally, dioxygenase that can both act as a histone arginine demethylase and a lysyl-hydroxylase. The sequence is that of Bifunctional arginine demethylase and lysyl-hydroxylase psr-1 (psr-1) from Caenorhabditis briggsae.